A 613-amino-acid polypeptide reads, in one-letter code: Coiled-coil domain-containing protein 116 (613 aa).

The tract at residues 41–68 (KPGRVPHPPSTCGSSALQGQRRNKRHPQ) is disordered. The segment covering 51-60 (TCGSSALQGQ) has biased composition (polar residues). A coiled-coil region spans residues 79–104 (ESQVLDSLETVVEKATERMAAMKTEA). 3 disordered regions span residues 329–395 (CRDG…AQVA), 509–541 (RQAS…QATE), and 565–613 (MSAC…EDGV). Ser386 carries the post-translational modification Phosphoserine. The span at 512–539 (SRLSTSHCSTETPSVQQEPATHTAQDQA) shows a compositional bias: polar residues. Positions 577 to 589 (KSKDMDNEGRDKA) are enriched in basic and acidic residues. Positions 590-613 (EIEDEDEDEFKDEDQDEDKDEDGV) are enriched in acidic residues.

The protein localises to the cytoplasm. Its subcellular location is the cytoskeleton. It localises to the microtubule organizing center. It is found in the centrosome. This Homo sapiens (Human) protein is Coiled-coil domain-containing protein 116 (CCDC116).